A 501-amino-acid polypeptide reads, in one-letter code: Chromosomal replication initiator protein DnaA (501 aa).

Residues 1 to 90 (MSVELWQQCV…KRSSAPRAAP (90 aa)) form a domain I, interacts with DnaA modulators region. The interval 91-164 (NAPLAAAASQ…QVEGALKHTS (74 aa)) is domain II. Positions 103–121 (AAPVASTPAPAPSKSSAKK) are enriched in low complexity. The disordered stretch occupies residues 103-150 (AAPVASTPAPAPSKSSAKKNAAENEEPSRDSFDPMAGASSQQAPIRAE). Basic and acidic residues predominate over residues 122–134 (NAAENEEPSRDSF). Positions 165 to 381 (YLNRTFTFEN…GALKRVIAHS (217 aa)) are domain III, AAA+ region. ATP is bound by residues Gly-209, Gly-211, Lys-212, and Thr-213. A domain IV, binds dsDNA region spans residues 382-501 (HFMGRDITIE…YKNLLRTLTT (120 aa)).

It belongs to the DnaA family. As to quaternary structure, oligomerizes as a right-handed, spiral filament on DNA at oriC.

It is found in the cytoplasm. Plays an essential role in the initiation and regulation of chromosomal replication. ATP-DnaA binds to the origin of replication (oriC) to initiate formation of the DNA replication initiation complex once per cell cycle. Binds the DnaA box (a 9 base pair repeat at the origin) and separates the double-stranded (ds)DNA. Forms a right-handed helical filament on oriC DNA; dsDNA binds to the exterior of the filament while single-stranded (ss)DNA is stabiized in the filament's interior. The ATP-DnaA-oriC complex binds and stabilizes one strand of the AT-rich DNA unwinding element (DUE), permitting loading of DNA polymerase. After initiation quickly degrades to an ADP-DnaA complex that is not apt for DNA replication. Binds acidic phospholipids. This is Chromosomal replication initiator protein DnaA from Pseudomonas fluorescens (strain SBW25).